The following is a 186-amino-acid chain: ATP synthase subunit delta (186 aa).

This sequence belongs to the ATPase delta chain family. In terms of assembly, F-type ATPases have 2 components, F(1) - the catalytic core - and F(0) - the membrane proton channel. F(1) has five subunits: alpha(3), beta(3), gamma(1), delta(1), epsilon(1). F(0) has three main subunits: a(1), b(2) and c(10-14). The alpha and beta chains form an alternating ring which encloses part of the gamma chain. F(1) is attached to F(0) by a central stalk formed by the gamma and epsilon chains, while a peripheral stalk is formed by the delta and b chains.

It localises to the cell inner membrane. In terms of biological role, f(1)F(0) ATP synthase produces ATP from ADP in the presence of a proton or sodium gradient. F-type ATPases consist of two structural domains, F(1) containing the extramembraneous catalytic core and F(0) containing the membrane proton channel, linked together by a central stalk and a peripheral stalk. During catalysis, ATP synthesis in the catalytic domain of F(1) is coupled via a rotary mechanism of the central stalk subunits to proton translocation. Functionally, this protein is part of the stalk that links CF(0) to CF(1). It either transmits conformational changes from CF(0) to CF(1) or is implicated in proton conduction. This is ATP synthase subunit delta from Brucella abortus (strain S19).